Reading from the N-terminus, the 367-residue chain is MNSSPAGTPSPQPSRANGNINLGPSANPNAQPTDFDFLKVIGKGNYGKVLLAKRKSDGAFYAVKVLQKKSILKKKEQSHIMAERSVLLKNVRHPFLVGLRYSFQTPEKLYFVLDYVNGGELFFHLQRERRFLEPRARFYAAEVASAIGYLHSLNIIYRDLKPENILLDCQGHVVLTDFGLCKEGVEPEDTTSTFCGTPEYLAPEVLRKEPYDRAVDWWCLGAVLYEMLHGLPPFYSQDVSQMYENILHQPLQIPGGRTVAACDLLQSLLHKDQRQRLGSKADFLEIKNHVFFSPINWDDLYHKRLTPPFNPNVTGPADLKHFDPEFTQEAVSKSIGCTPDTVASSSGASSAFLGFSYAPEDDDILDC.

The segment at Met1–Ala26 is disordered. Residue Ser10 is modified to Phosphoserine. A Protein kinase domain is found at Phe35–Phe292. ATP is bound by residues Ile41–Val49 and Lys64. The Nuclear localization signal motif lies at Lys68 to Ser78. Catalysis depends on Asp159, which acts as the Proton acceptor. Residue Thr193 is modified to Phosphothreonine; by PDPK1. Positions Ser293 to Cys367 constitute an AGC-kinase C-terminal domain. Phosphoserine is present on residues Ser334 and Ser356. Tyr357 is modified (phosphotyrosine).

The protein belongs to the protein kinase superfamily. AGC Ser/Thr protein kinase family. In terms of processing, activated by phosphorylation on Ser-356 by an unknown kinase (may be mTORC2 but not confirmed), transforming it into a substrate for PDPK1 which then phosphorylates it on Thr-193. As to expression, highly expressed in liver, kidney and pancreas, and at lower levels in brain.

The protein resides in the cytoplasm. Its subcellular location is the nucleus. The catalysed reaction is L-seryl-[protein] + ATP = O-phospho-L-seryl-[protein] + ADP + H(+). It catalyses the reaction L-threonyl-[protein] + ATP = O-phospho-L-threonyl-[protein] + ADP + H(+). Its activity is regulated as follows. Two specific sites, one in the kinase domain (Thr-193) and the other in the C-terminal regulatory region (Ser-356), need to be phosphorylated for its full activation. In terms of biological role, serine/threonine-protein kinase which is involved in the regulation of a wide variety of ion channels, membrane transporters, cell growth, survival and proliferation. Up-regulates Na(+) channels: SCNN1A/ENAC, K(+) channels: KCNA3/Kv1.3, KCNE1 and KCNQ1, amino acid transporter: SLC6A19, glutamate transporter: SLC1A6/EAAT4, glutamate receptors: GRIA1/GLUR1 and GRIK2/GLUR6, Na(+)/H(+) exchanger: SLC9A3/NHE3, and the Na(+)/K(+) ATPase. This chain is Serine/threonine-protein kinase Sgk2 (SGK2), found in Homo sapiens (Human).